The sequence spans 683 residues: Probable serine/threonine-protein kinase HAL5-like (683 aa).

Disordered stretches follow at residues Met1–Glu90 and Tyr157–Ala200. Low complexity predominate over residues Pro36–Ser48. Residues Ala50 to Gly60 are compositionally biased toward gly residues. Residues Ser69–Ser85 are compositionally biased toward polar residues. Residues Gly364–Met670 form the Protein kinase domain. Residues Ile370–Val378 and Lys411 each bind ATP. Residue Asp521 is the Proton acceptor of the active site.

This sequence belongs to the protein kinase superfamily. CAMK Ser/Thr protein kinase family. NPR/HAL subfamily. HAL5 sub-subfamily.

It catalyses the reaction L-seryl-[protein] + ATP = O-phospho-L-seryl-[protein] + ADP + H(+). It carries out the reaction L-threonyl-[protein] + ATP = O-phospho-L-threonyl-[protein] + ADP + H(+). This Eremothecium gossypii (strain ATCC 10895 / CBS 109.51 / FGSC 9923 / NRRL Y-1056) (Yeast) protein is Probable serine/threonine-protein kinase HAL5-like.